Here is a 144-residue protein sequence, read N- to C-terminus: MNFKYIVAVSFLIASAYARSEENDEQSLSQRDVLEEESLREIRGIGTKIIGGLKTAVKGALKELASTYVNGKRTAEDHEVMKRLEAVMRDLDSLDYPEEASERETRGFNQEEIANLFTKKEKRILGPVISTIGGVLGGLLKNLG.

The first 18 residues, 1–18 (MNFKYIVAVSFLIASAYA), serve as a signal peptide directing secretion. A propeptide spanning residues 19 to 43 (RSEENDEQSLSQRDVLEEESLREIR) is cleaved from the precursor. N70 bears the Asparagine amide mark. Residues 74-123 (TAEDHEVMKRLEAVMRDLDSLDYPEEASERETRGFNQEEIANLFTKKEKR) constitute a propeptide that is removed on maturation. L143 carries the leucine amide modification.

The protein belongs to the bombinin family. In terms of tissue distribution, expressed by the skin glands.

It is found in the secreted. Maximin-11 shows antimicrobial activity against bacteria and against the fungus C.albicans. It has little hemolytic activity. Its function is as follows. Maximin-H1 shows antibacterial activity against both Gram-positive and Gram-negative bacteria. It also shows antimicrobial activity against the fungus C.albicans. Shows strong hemolytic activity. This chain is Maximins 11/H1, found in Bombina maxima (Giant fire-bellied toad).